Here is a 489-residue protein sequence, read N- to C-terminus: Betaine aldehyde dehydrogenase (489 aa).

Asn-93 is a K(+) binding site. Residue 150 to 152 (GAW) participates in NAD(+) binding. Lys-162 functions as the Charge relay system in the catalytic mechanism. Position 176-179 (176-179 (KPSE)) interacts with NAD(+). A K(+)-binding site is contributed by Val-180. 229–232 (EVGT) provides a ligand contact to NAD(+). Residue Leu-245 coordinates K(+). The active-site Proton acceptor is Glu-251. 3 residues coordinate NAD(+): Gly-253, Cys-285, and Glu-386. The active-site Nucleophile is Cys-285. At Cys-285 the chain carries Cysteine sulfenic acid (-SOH). 2 residues coordinate K(+): Lys-456 and Gly-459. Catalysis depends on Glu-463, which acts as the Charge relay system.

It belongs to the aldehyde dehydrogenase family. Dimer of dimers. Requires K(+) as cofactor.

It catalyses the reaction betaine aldehyde + NAD(+) + H2O = glycine betaine + NADH + 2 H(+). The protein operates within amine and polyamine biosynthesis; betaine biosynthesis via choline pathway; betaine from betaine aldehyde: step 1/1. Functionally, involved in the biosynthesis of the osmoprotectant glycine betaine. Catalyzes the irreversible oxidation of betaine aldehyde to the corresponding acid. The polypeptide is Betaine aldehyde dehydrogenase (Chromohalobacter salexigens (strain ATCC BAA-138 / DSM 3043 / CIP 106854 / NCIMB 13768 / 1H11)).